We begin with the raw amino-acid sequence, 148 residues long: Ribonuclease H (148 aa).

The 142-residue stretch at 1–142 (MSDSVEIYTD…ADQLANRGVD (142 aa)) folds into the RNase H type-1 domain. Mg(2+)-binding residues include aspartate 10, glutamate 48, aspartate 70, and aspartate 134. The interval 129–148 (GNERADQLANRGVDEVRAQR) is disordered.

This sequence belongs to the RNase H family. Monomer. Mg(2+) is required as a cofactor.

Its subcellular location is the cytoplasm. It catalyses the reaction Endonucleolytic cleavage to 5'-phosphomonoester.. Endonuclease that specifically degrades the RNA of RNA-DNA hybrids. The protein is Ribonuclease H of Pseudomonas entomophila (strain L48).